The chain runs to 418 residues: Serine hydroxymethyltransferase (418 aa).

(6S)-5,6,7,8-tetrahydrofolate is bound by residues L121 and 125–127 (GHL). K230 is modified (N6-(pyridoxal phosphate)lysine). (6S)-5,6,7,8-tetrahydrofolate contacts are provided by residues E246 and 355–357 (SPF).

The protein belongs to the SHMT family. In terms of assembly, homodimer. Pyridoxal 5'-phosphate serves as cofactor.

The protein localises to the cytoplasm. The enzyme catalyses (6R)-5,10-methylene-5,6,7,8-tetrahydrofolate + glycine + H2O = (6S)-5,6,7,8-tetrahydrofolate + L-serine. It functions in the pathway one-carbon metabolism; tetrahydrofolate interconversion. Its pathway is amino-acid biosynthesis; glycine biosynthesis; glycine from L-serine: step 1/1. In terms of biological role, catalyzes the reversible interconversion of serine and glycine with tetrahydrofolate (THF) serving as the one-carbon carrier. This reaction serves as the major source of one-carbon groups required for the biosynthesis of purines, thymidylate, methionine, and other important biomolecules. Also exhibits THF-independent aldolase activity toward beta-hydroxyamino acids, producing glycine and aldehydes, via a retro-aldol mechanism. This chain is Serine hydroxymethyltransferase, found in Streptococcus pneumoniae (strain 70585).